Consider the following 139-residue polypeptide: MFFRISTVFVVALAAFAAASPAPWGAPPPTTTTHPPVTTTVTVTAPATTTTIPASQCNTGDAQCCNSVQSATAPAVTSLLGLLGIVLEDINVLVGLSCDPISVIGVGGGANCVQQPVCCENNNFNGLINIGCTPINIFL.

A signal peptide spans 1 to 21; the sequence is MFFRISTVFVVALAAFAAASP. 4 disulfide bridges follow: cysteine 57/cysteine 118, cysteine 64/cysteine 112, cysteine 65/cysteine 98, and cysteine 119/cysteine 132.

Belongs to the fungal hydrophobin family. As to quaternary structure, self-assembles to form functional amyloid fibrils called rodlets. Self-assembly into fibrillar rodlets occurs spontaneously at hydrophobic:hydrophilic interfaces and the rodlets further associate laterally to form amphipathic monolayers.

It localises to the secreted. Its subcellular location is the cell wall. Functionally, aerial growth, conidiation, and dispersal of filamentous fungi in the environment rely upon a capability of their secreting small amphipathic proteins called hydrophobins (HPBs) with low sequence identity. Class I can self-assemble into an outermost layer of rodlet bundles on aerial cell surfaces, conferring cellular hydrophobicity that supports fungal growth, development and dispersal; whereas Class II form highly ordered films at water-air interfaces through intermolecular interactions but contribute nothing to the rodlet structure. Hah1 is a class I hydrophobin that is involved in aerial growth of mycelia, but does not play a role in pathogenesis. This Heterobasidion annosum (Root rot fungus) protein is Class I hydrophobin 1.